The primary structure comprises 201 residues: Putative Ras-related protein Rab-1C (201 aa).

GTP contacts are provided by residues 15 to 23, 33 to 40, and 63 to 67; these read GDSGVGKSC, YTESYIST, and DTAGQ. The short motif at 37–45 is the Effector region element; that stretch reads YISTIGVDF. Serine 76 is subject to (Microbial infection) O-(2-cholinephosphoryl)serine. GTP is bound by residues 121–124 and 151–153; these read NKSD and SAK. A disordered region spans residues 174–201; sequence GPGAASGGERPNLKIDSTPVKPAGGGCC. S-geranylgeranyl cysteine attachment occurs at residues cysteine 200 and cysteine 201.

Belongs to the small GTPase superfamily. Rab family. (Microbial infection) Phosphocholinated at Ser-76 by L.pneumophila AnkX, leading to displace GDP dissociation inhibitors (GDI). Both GDP-bound and GTP-bound forms can be phosphocholinated. Dephosphocholinated by L.pneumophila Lem3, restoring accessibility to L.pneumophila GTPase effector LepB. In terms of processing, (Microbial infection) Glycosylated by S.typhimurium protein Ssek3: arginine GlcNAcylation prevents GTPase activity, thereby disrupting vesicular protein transport from the endoplasmic reticulum (ER) to the Golgi compartment.

It localises to the membrane. The protein resides in the cytoplasm. The catalysed reaction is GTP + H2O = GDP + phosphate + H(+). Functionally, protein transport. Probably involved in vesicular traffic. In Homo sapiens (Human), this protein is Putative Ras-related protein Rab-1C (RAB1C).